A 304-amino-acid chain; its full sequence is Ribonuclease Z (304 aa).

Zn(2+) is bound by residues H63, H65, D67, H68, H141, D208, and H266. The Proton acceptor role is filled by D67.

It belongs to the RNase Z family. As to quaternary structure, homodimer. The cofactor is Zn(2+).

The enzyme catalyses Endonucleolytic cleavage of RNA, removing extra 3' nucleotides from tRNA precursor, generating 3' termini of tRNAs. A 3'-hydroxy group is left at the tRNA terminus and a 5'-phosphoryl group is left at the trailer molecule.. Functionally, zinc phosphodiesterase, which displays some tRNA 3'-processing endonuclease activity. Probably involved in tRNA maturation, by removing a 3'-trailer from precursor tRNA. In Chlamydia muridarum (strain MoPn / Nigg), this protein is Ribonuclease Z.